Reading from the N-terminus, the 387-residue chain is 3-ketoacyl-CoA thiolase (387 aa).

Catalysis depends on Cys91, which acts as the Acyl-thioester intermediate. Active-site proton acceptor residues include His343 and Cys373.

Belongs to the thiolase-like superfamily. Thiolase family. Heterotetramer of two alpha chains (FadB) and two beta chains (FadA).

It is found in the cytoplasm. The enzyme catalyses an acyl-CoA + acetyl-CoA = a 3-oxoacyl-CoA + CoA. It functions in the pathway lipid metabolism; fatty acid beta-oxidation. Catalyzes the final step of fatty acid oxidation in which acetyl-CoA is released and the CoA ester of a fatty acid two carbons shorter is formed. The polypeptide is 3-ketoacyl-CoA thiolase (Escherichia coli O9:H4 (strain HS)).